Reading from the N-terminus, the 381-residue chain is Phthiodiolone/phenolphthiodiolone dimycocerosates ketoreductase (381 aa).

The protein belongs to the mer family. Phthiodiolone/phenolphthiodiolone dimycocerosates ketoreductase subfamily.

Its function is as follows. Catalyzes the reduction of the keto moiety of phthiodiolone dimycocerosates (DIM B) and glycosylated phenolphthiodiolone dimycocerosates to form the intermediate compounds phthiotriol and glycosylated phenolphthiotriol dimycocerosates during phthiocerol dimycocerosates (DIM A) and glycosylated phenolphthiocerol dimycocerosates (PGL) biosynthesis. The polypeptide is Phthiodiolone/phenolphthiodiolone dimycocerosates ketoreductase (Mycobacterium bovis (strain ATCC BAA-935 / AF2122/97)).